A 558-amino-acid polypeptide reads, in one-letter code: Magnesium-chelatase 60 kDa subunit (558 aa).

2 disordered regions span residues 234 to 268 and 298 to 325; these read MPAS…GEEM and MARG…MGRL. Positions 240-254 are enriched in acidic residues; that stretch reads APPEPEPEPPEDQPD. Low complexity predominate over residues 298 to 308; it reads MARGATGTGSA. The VWFA domain maps to 376-555; the sequence is VLIFAVDASG…HKLSNVLGAA (180 aa).

Belongs to the Mg-chelatase subunits D/I family.

The enzyme catalyses protoporphyrin IX + Mg(2+) + ATP + H2O = Mg-protoporphyrin IX + ADP + phosphate + 3 H(+). It participates in porphyrin-containing compound metabolism; bacteriochlorophyll biosynthesis. Involved in bacteriochlorophyll biosynthesis; introduces a magnesium ion into protoporphyrin IX to yield Mg-protoporphyrin IX. The sequence is that of Magnesium-chelatase 60 kDa subunit (bchD) from Cereibacter sphaeroides (strain ATCC 17023 / DSM 158 / JCM 6121 / CCUG 31486 / LMG 2827 / NBRC 12203 / NCIMB 8253 / ATH 2.4.1.) (Rhodobacter sphaeroides).